We begin with the raw amino-acid sequence, 551 residues long: Harmonin (551 aa).

The segment at 1–86 (MDRKVAREFR…LTPRRSRKLK (86 aa)) is N-terminal domain. 2 PDZ domains span residues 87–169 (EVRL…HIGL) and 211–293 (KVFI…AGAG). A mediates interaction with MYO7B region spans residues 194–532 (GGRSSLGSPG…QKAWNQGDWI (339 aa)). Ser-219 is modified (phosphoserine). Residues 318–377 (LMQKRLAMESNKILQEQQEMERQRKKEIAQKAAEENERYRKEMEQIVEEEEKFRKQWEED) adopt a coiled-coil conformation. Residues 401–425 (KPKYDLGVDPEFDPADDLDGGTNKR) are disordered. A compositionally biased stretch (acidic residues) spans 408 to 419 (VDPEFDPADDLD). Residues 452 to 536 (DVRLLRVKKE…NQGDWIDLVV (85 aa)) form the PDZ 3 domain.

In terms of assembly, part of the IMAC/intermicrovillar adhesion complex/intermicrovillar tip-link complex composed of ANKS4B, MYO7B, USH1C, CDHR2 and CDHR5. Part of a complex composed of USH1C, USH1G and MYO7A. Interacts with F-actin. Interacts with USH2A. Interacts with SLC4A7. Interacts (via PDZ1 domain) with the C-terminus of USHBP1. Interacts (via N-terminus and PDZ 2 domain) with CDH23. Interacts with USH1G. Interacts with MYO7B. Interacts with CDHR2 and CDHR5; may mediate their interaction with MYO7B at the microvilli tip. Interacts (via PDZ 1 domain) with ANKS4B. Interacts (via PDZ 1 domain) with DOCK4.

It is found in the cytoplasm. The protein localises to the cytosol. Its subcellular location is the cytoskeleton. It localises to the cell projection. The protein resides in the microvillus. In terms of biological role, anchoring/scaffolding protein that is a part of the functional network formed by USH1C, USH1G, CDH23 and MYO7A that mediates mechanotransduction in cochlear hair cells. Required for normal development and maintenance of cochlear hair cell bundles. As part of the intermicrovillar adhesion complex/IMAC plays a role in brush border differentiation, controlling microvilli organization and length. Probably plays a central regulatory role in the assembly of the complex, recruiting CDHR2, CDHR5 and MYO7B to the microvilli tips. The sequence is that of Harmonin (USH1C) from Bos taurus (Bovine).